Here is a 264-residue protein sequence, read N- to C-terminus: Triosephosphate isomerase (264 aa).

13 to 15 (NWK) contributes to the substrate binding site. Histidine 106 (electrophile) is an active-site residue. The Proton acceptor role is filled by glutamate 179. Substrate-binding positions include glycine 185, serine 223, and 244–245 (GG).

Belongs to the triosephosphate isomerase family. Homodimer.

Its subcellular location is the cytoplasm. It carries out the reaction D-glyceraldehyde 3-phosphate = dihydroxyacetone phosphate. It participates in carbohydrate biosynthesis; gluconeogenesis. Its pathway is carbohydrate degradation; glycolysis; D-glyceraldehyde 3-phosphate from glycerone phosphate: step 1/1. Its function is as follows. Involved in the gluconeogenesis. Catalyzes stereospecifically the conversion of dihydroxyacetone phosphate (DHAP) to D-glyceraldehyde-3-phosphate (G3P). This chain is Triosephosphate isomerase, found in Acinetobacter baumannii (strain AB0057).